Reading from the N-terminus, the 276-residue chain is MRRFFWLVAAALLLAGCAGEKGIVEKEGYQLDTRRQAQAAYPRIKVLVIHYTADDFDSSLATLTDKQVSSHYLVPAVPPRYNGKPRIWQLVPEQELAWHAGISAWRGATRLNDTSIGIELENRGWQKSAGVKYFAPFEPAQIQALIPLAKDIIARYHIKPENVVAHADIAPQRKDDPGPLFPWQQLAQQGIGAWPDAQRVNFYLAGRAPHTPVDTASLLELLARYGYDVKPDMTPREQRRVIMAFQMHFRPTLYNGEADAETQAIAEALLEKYGQD.

The N-terminal stretch at 1–16 is a signal peptide; the sequence is MRRFFWLVAAALLLAG. Cysteine 17 carries N-palmitoyl cysteine lipidation. A lipid anchor (S-diacylglycerol cysteine) is attached at cysteine 17. The N-acetylmuramoyl-L-alanine amidase domain maps to 42–179; it reads PRIKVLVIHY…APQRKDDPGP (138 aa). A Zn(2+)-binding site is contributed by histidine 50. 51 to 52 is a substrate binding site; the sequence is YT. The active-site Proton acceptor is the glutamate 119. Positions 166 and 176 each coordinate Zn(2+).

Belongs to the N-acetylmuramoyl-L-alanine amidase 2 family. Requires Zn(2+) as cofactor.

The protein resides in the cell outer membrane. The catalysed reaction is Hydrolyzes the link between N-acetylmuramoyl residues and L-amino acid residues in certain cell-wall glycopeptides.. In Escherichia coli (strain K12), this protein is N-acetylmuramoyl-L-alanine amidase AmiD (amiD).